Consider the following 253-residue polypeptide: Ribonuclease HII (253 aa).

The RNase H type-2 domain occupies 70–253 (NLIAGIDEVG…KSFEPIKSML (184 aa)). A divalent metal cation contacts are provided by Asp76, Glu77, and Asp168.

It belongs to the RNase HII family. The cofactor is Mn(2+). Mg(2+) serves as cofactor.

Its subcellular location is the cytoplasm. The enzyme catalyses Endonucleolytic cleavage to 5'-phosphomonoester.. Endonuclease that specifically degrades the RNA of RNA-DNA hybrids. The sequence is that of Ribonuclease HII from Streptococcus agalactiae serotype Ia (strain ATCC 27591 / A909 / CDC SS700).